Here is a 79-residue protein sequence, read N- to C-terminus: DNA-directed RNA polymerase subunit omega (79 aa).

The protein belongs to the RNA polymerase subunit omega family. As to quaternary structure, the RNAP catalytic core consists of 2 alpha, 1 beta, 1 beta' and 1 omega subunit. When a sigma factor is associated with the core the holoenzyme is formed, which can initiate transcription.

The enzyme catalyses RNA(n) + a ribonucleoside 5'-triphosphate = RNA(n+1) + diphosphate. Functionally, promotes RNA polymerase assembly. Latches the N- and C-terminal regions of the beta' subunit thereby facilitating its interaction with the beta and alpha subunits. This is DNA-directed RNA polymerase subunit omega from Thermotoga petrophila (strain ATCC BAA-488 / DSM 13995 / JCM 10881 / RKU-1).